Reading from the N-terminus, the 467-residue chain is ATP synthase subunit beta (467 aa).

152–159 (GGAGVGKT) lines the ATP pocket.

It belongs to the ATPase alpha/beta chains family. As to quaternary structure, F-type ATPases have 2 components, CF(1) - the catalytic core - and CF(0) - the membrane proton channel. CF(1) has five subunits: alpha(3), beta(3), gamma(1), delta(1), epsilon(1). CF(0) has three main subunits: a(1), b(2) and c(9-12). The alpha and beta chains form an alternating ring which encloses part of the gamma chain. CF(1) is attached to CF(0) by a central stalk formed by the gamma and epsilon chains, while a peripheral stalk is formed by the delta and b chains.

The protein localises to the cell membrane. It carries out the reaction ATP + H2O + 4 H(+)(in) = ADP + phosphate + 5 H(+)(out). Functionally, produces ATP from ADP in the presence of a proton gradient across the membrane. The catalytic sites are hosted primarily by the beta subunits. In Caldicellulosiruptor saccharolyticus (strain ATCC 43494 / DSM 8903 / Tp8T 6331), this protein is ATP synthase subunit beta.